The chain runs to 553 residues: Methionine--tRNA ligase (553 aa).

The 'HIGH' region signature appears at 12–22; sequence PYANSQLHLGH. Zn(2+) is bound by residues C144, C147, C157, and C160. The 'KMSKS' region signature appears at 332 to 336; sequence KFSKS. Residue K335 participates in ATP binding.

The protein belongs to the class-I aminoacyl-tRNA synthetase family. MetG type 1 subfamily. In terms of assembly, monomer. It depends on Zn(2+) as a cofactor.

Its subcellular location is the cytoplasm. It catalyses the reaction tRNA(Met) + L-methionine + ATP = L-methionyl-tRNA(Met) + AMP + diphosphate. Is required not only for elongation of protein synthesis but also for the initiation of all mRNA translation through initiator tRNA(fMet) aminoacylation. This Dehalococcoides mccartyi (strain ATCC BAA-2100 / JCM 16839 / KCTC 5957 / BAV1) protein is Methionine--tRNA ligase.